The chain runs to 147 residues: Globin (147 aa).

One can recognise a Globin domain in the interval 2–147; the sequence is SFSAAQVDTV…SVANGIGQYQ (146 aa). Heme b-binding residues include H64 and H95.

It belongs to the globin family. In terms of assembly, homodimer or homooligomer.

The polypeptide is Globin (Aequiyoldia eightsii (Antarctic yoldia)).